The sequence spans 288 residues: Very-long-chain (3R)-3-hydroxyacyl-CoA dehydratase 1 (288 aa).

A disordered region spans residues 1-59 (MGRLTEAAAAGGGASAARSAGPPPAPLPLSSTSPGCAAAMASSEEDGTNGGASEASDER). Residues 1-75 (MGRLTEAAAA…RRLGLLATIW (75 aa)) are Cytoplasmic-facing. A helical membrane pass occupies residues 76-95 (LTFYNIAMTAGWLVLAIAMV). The Lumenal portion of the chain corresponds to 96–114 (RFYMEKGTHKGLYKSIQKT). The chain crosses the membrane as a helical span at residues 115-131 (LKFFQTFALLEIVHCLI). Residues 132-141 (GIVPTSVLVA) lie on the Cytoplasmic side of the membrane. The helical transmembrane segment at 142–159 (GVQVSSRIFMVWLVTHSI) threads the bilayer. Over 160–165 (KPIQNE) the chain is Lumenal. The helical transmembrane segment at 166–180 (ESVVLFLVAWTVTEI) threads the bilayer. Topologically, residues 181 to 203 (TRYSFYTFSLLDHLPYFIKWARY) are cytoplasmic. The chain crosses the membrane as a helical span at residues 204-221 (NFFIILYPVGVAGELLTI). Residues Tyr-210 and Glu-217 contribute to the active site. Over 222 to 251 (YAALPYVKKTGMFSIRLPNKYNVSFDYYYF) the chain is Lumenal. N-linked (GlcNAc...) asparagine glycosylation occurs at Asn-243. The helical transmembrane segment at 252–269 (LLITMASYIPLFPQLYFH) threads the bilayer. The Cytoplasmic segment spans residues 270–288 (MLRQRRKVLHGEVIVEKDD).

The protein belongs to the very long-chain fatty acids dehydratase HACD family. As to quaternary structure, may interact with enzymes of the ELO family (including ELOVL1); with those enzymes that mediate condensation, the first of the four steps of the reaction cycle responsible for fatty acids elongation, may be part of a larger fatty acids elongase complex. Interacts with TECR. In terms of processing, N-glycosylated. Expressed in heart.

The protein resides in the endoplasmic reticulum membrane. The enzyme catalyses a very-long-chain (3R)-3-hydroxyacyl-CoA = a very-long-chain (2E)-enoyl-CoA + H2O. It catalyses the reaction (3R)-hydroxyhexadecanoyl-CoA = (2E)-hexadecenoyl-CoA + H2O. The catalysed reaction is (3R)-hydroxyoctadecanoyl-CoA = (2E)-octadecenoyl-CoA + H2O. It carries out the reaction (3R)-hydroxyeicosanoyl-CoA = (2E)-eicosenoyl-CoA + H2O. The enzyme catalyses (3R)-hydroxydocosanoyl-CoA = (2E)-docosenoyl-CoA + H2O. It catalyses the reaction (3R)-hydroxytetracosanoyl-CoA = (2E)-tetracosenoyl-CoA + H2O. The catalysed reaction is (3R)-hydroxyhexacosanoyl-CoA = (2E)-hexacosenoyl-CoA + H2O. It participates in lipid metabolism; fatty acid biosynthesis. Catalyzes the third of the four reactions of the long-chain fatty acids elongation cycle. This endoplasmic reticulum-bound enzymatic process, allows the addition of two carbons to the chain of long- and very long-chain fatty acids/VLCFAs per cycle. This enzyme catalyzes the dehydration of the 3-hydroxyacyl-CoA intermediate into trans-2,3-enoyl-CoA, within each cycle of fatty acid elongation. Thereby, it participates in the production of VLCFAs of different chain lengths that are involved in multiple biological processes as precursors of membrane lipids and lipid mediators. This is Very-long-chain (3R)-3-hydroxyacyl-CoA dehydratase 1 (HACD1) from Ovis aries (Sheep).